The primary structure comprises 24 residues: Conotoxin PIVE (24 aa).

3 disulfides stabilise this stretch: cysteine 2–cysteine 10, cysteine 3–cysteine 15, and cysteine 13–cysteine 19. Lysine 24 carries the lysine amide modification.

Belongs to the conotoxin A superfamily. In terms of tissue distribution, expressed by the venom duct.

The protein localises to the secreted. In terms of biological role, probable neurotoxin with ion channel inhibitor activity. In vivo, elicits dose-dependently excitatory activity upon injection into fish. Its action is slowly reversible. This is Conotoxin PIVE from Conus purpurascens (Purple cone).